Here is a 624-residue protein sequence, read N- to C-terminus: Probable Xaa-Pro aminopeptidase P (624 aa).

Mn(2+) contacts are provided by aspartate 414, aspartate 425, glutamate 530, and glutamate 544.

Belongs to the peptidase M24B family. The cofactor is Mn(2+).

It catalyses the reaction Release of any N-terminal amino acid, including proline, that is linked to proline, even from a dipeptide or tripeptide.. In terms of biological role, catalyzes the removal of a penultimate prolyl residue from the N-termini of peptides. The polypeptide is Probable Xaa-Pro aminopeptidase P (AMPP) (Chaetomium globosum (strain ATCC 6205 / CBS 148.51 / DSM 1962 / NBRC 6347 / NRRL 1970) (Soil fungus)).